The primary structure comprises 719 residues: B3 domain-containing protein Os03g0120900 (719 aa).

The segment at residues histidine 7–asparagine 110 is a DNA-binding region (TF-B3). Disordered regions lie at residues arginine 328–glutamine 381 and glutamate 412–valine 443. The span at aspartate 351 to proline 366 shows a compositional bias: basic and acidic residues. Over residues histidine 416 to asparagine 430 the composition is skewed to polar residues.

The protein localises to the nucleus. This chain is B3 domain-containing protein Os03g0120900, found in Oryza sativa subsp. japonica (Rice).